The following is a 155-amino-acid chain: Ribosomal RNA large subunit methyltransferase H 1 (155 aa).

Residues L76, G108, and 127 to 132 (FSKMTF) each bind S-adenosyl-L-methionine.

This sequence belongs to the RNA methyltransferase RlmH family. In terms of assembly, homodimer.

The protein localises to the cytoplasm. The catalysed reaction is pseudouridine(1915) in 23S rRNA + S-adenosyl-L-methionine = N(3)-methylpseudouridine(1915) in 23S rRNA + S-adenosyl-L-homocysteine + H(+). Specifically methylates the pseudouridine at position 1915 (m3Psi1915) in 23S rRNA. The polypeptide is Ribosomal RNA large subunit methyltransferase H 1 (Thermoanaerobacter pseudethanolicus (strain ATCC 33223 / 39E) (Clostridium thermohydrosulfuricum)).